The sequence spans 107 residues: Transcription initiation factor IIA subunit 2-2 (107 aa).

It belongs to the TFIIA subunit 2 family. As to quaternary structure, TFIIA is a heterodimer of the large unprocessed subunit 1 and a small subunit gamma. It was originally believed to be a heterotrimer of an alpha (p30), a beta (p20) and a gamma (p14) subunit.

The protein localises to the nucleus. In terms of biological role, TFIIA is a component of the transcription machinery of RNA polymerase II and plays an important role in transcriptional activation. TFIIA in a complex with TBP mediates transcriptional activity. The sequence is that of Transcription initiation factor IIA subunit 2-2 (TfIIA-S-2) from Drosophila melanogaster (Fruit fly).